A 425-amino-acid chain; its full sequence is Divalent metal cation transporter MntH (425 aa).

11 consecutive transmembrane segments (helical) span residues 30 to 50, 61 to 81, 107 to 127, 134 to 154, 167 to 187, 209 to 231, 255 to 275, 294 to 314, 344 to 364, 365 to 385, and 401 to 421; these read LLPF…PGNF, GYML…IQSL, IGLW…EFIG, LLFG…SFAI, AGIA…TFFA, VLLA…HSAL, ILIA…VAAA, FGHL…LVAG, FITI…TTAL, VLSQ…LIMF, and ITVV…FLIV.

The protein belongs to the NRAMP family.

The protein localises to the cell membrane. H(+)-stimulated, divalent metal cation uptake system. Involved in manganese uptake. Can probably also transport cadmium, cobalt, copper and zinc, but not iron. May be the predominant transporter of manganese during logarithmic phase growth. This chain is Divalent metal cation transporter MntH, found in Bacillus subtilis (strain 168).